Here is a 225-residue protein sequence, read N- to C-terminus: Isoprenyl transferase 1 (225 aa).

The active site involves Asp3. Residue Asp3 participates in Mg(2+) binding. Substrate is bound by residues 4-7 (GNRR), Trp8, His21, and 49-51 (SME). Asn52 (proton acceptor) is an active-site residue. Substrate is bound by residues Arg55, Arg174, and 180–182 (RLS). Glu193 is a Mg(2+) binding site.

The protein belongs to the UPP synthase family. In terms of assembly, homodimer. Mg(2+) is required as a cofactor.

Functionally, catalyzes the condensation of isopentenyl diphosphate (IPP) with allylic pyrophosphates generating different type of terpenoids. The protein is Isoprenyl transferase 1 of Corynebacterium glutamicum (strain ATCC 13032 / DSM 20300 / JCM 1318 / BCRC 11384 / CCUG 27702 / LMG 3730 / NBRC 12168 / NCIMB 10025 / NRRL B-2784 / 534).